The following is a 507-amino-acid chain: Cytochrome c-552 (507 aa).

The N-terminal stretch at 1–22 (MTKFKLLLAGSLVAIVSMGLLA) is a signal peptide. Heme c contacts are provided by His102, Cys130, Cys133, Lys134, Cys168, Cys171, His172, Cys211, Cys214, and His215. Positions 217, 218, 274, and 276 each coordinate Ca(2+). Tyr218 serves as a coordination point for substrate. A substrate-binding site is contributed by His277. Heme c-binding residues include His288, Cys295, Cys298, His299, His313, Cys326, Cys329, His330, and His405.

It belongs to the cytochrome c-552 family. In terms of assembly, homodimer. Interacts with NrfH. May form a heterotetramer with NrfH. The cofactor is Ca(2+). Heme c serves as cofactor.

The protein resides in the periplasm. It carries out the reaction 6 Fe(III)-[cytochrome c] + NH4(+) + 2 H2O = 6 Fe(II)-[cytochrome c] + nitrite + 8 H(+). It participates in nitrogen metabolism; nitrate reduction (assimilation). Catalyzes the reduction of nitrite to ammonia, consuming six electrons in the process. Has very low activity toward hydroxylamine, and even lower activity toward sulfite. Sulfite reductase activity is maximal at neutral pH. In Wolinella succinogenes (strain ATCC 29543 / DSM 1740 / CCUG 13145 / JCM 31913 / LMG 7466 / NCTC 11488 / FDC 602W) (Vibrio succinogenes), this protein is Cytochrome c-552 (nrfA).